The primary structure comprises 268 residues: Ribosomal RNA small subunit methyltransferase A (268 aa).

Residues Asn16, Leu18, Gly43, Glu64, Asp89, and Asn110 each contribute to the S-adenosyl-L-methionine site.

It belongs to the class I-like SAM-binding methyltransferase superfamily. rRNA adenine N(6)-methyltransferase family. RsmA subfamily.

The protein resides in the cytoplasm. It carries out the reaction adenosine(1518)/adenosine(1519) in 16S rRNA + 4 S-adenosyl-L-methionine = N(6)-dimethyladenosine(1518)/N(6)-dimethyladenosine(1519) in 16S rRNA + 4 S-adenosyl-L-homocysteine + 4 H(+). In terms of biological role, specifically dimethylates two adjacent adenosines (A1518 and A1519) in the loop of a conserved hairpin near the 3'-end of 16S rRNA in the 30S particle. May play a critical role in biogenesis of 30S subunits. The polypeptide is Ribosomal RNA small subunit methyltransferase A (Pseudomonas syringae pv. syringae (strain B728a)).